Here is a 264-residue protein sequence, read N- to C-terminus: Methionine aminopeptidase (264 aa).

Substrate is bound at residue His79. A divalent metal cation is bound by residues Asp97, Asp108, and His171. Residue His178 participates in substrate binding. Residues Glu204 and Glu235 each contribute to the a divalent metal cation site.

This sequence belongs to the peptidase M24A family. Methionine aminopeptidase type 1 subfamily. In terms of assembly, monomer. It depends on Co(2+) as a cofactor. Zn(2+) is required as a cofactor. The cofactor is Mn(2+). Requires Fe(2+) as cofactor.

The catalysed reaction is Release of N-terminal amino acids, preferentially methionine, from peptides and arylamides.. Removes the N-terminal methionine from nascent proteins. The N-terminal methionine is often cleaved when the second residue in the primary sequence is small and uncharged (Met-Ala-, Cys, Gly, Pro, Ser, Thr, or Val). Requires deformylation of the N(alpha)-formylated initiator methionine before it can be hydrolyzed. The protein is Methionine aminopeptidase of Buchnera aphidicola subsp. Acyrthosiphon pisum (strain APS) (Acyrthosiphon pisum symbiotic bacterium).